The chain runs to 165 residues: MVAMAAGPSGCLVPAFGLRLLLATVLQAVSAFGAEFSSEACRELGFSSNLLCSSCDLLGQFNLLQLDPDCRGCCQEEAQFETKKLYAGAILEVCGUKLGRFPQVQAFVRSDKPKLFRGLQIKYVRGSDPVLKLLDDNGNIAEELSILKWNTDSVEEFLSEKLERI.

The N-terminal stretch at 1 to 31 (MVAMAAGPSGCLVPAFGLRLLLATVLQAVSA) is a signal peptide. Residue selenocysteine 96 is a non-standard amino acid, selenocysteine.

As to quaternary structure, forms a tight complex with UGGT1/UGCGL1. Interacts with UGGT2/UGCGL2. Interacts with RDH11. In terms of processing, the N-terminus is blocked. Higher levels in prostate and thyroid gland.

It localises to the endoplasmic reticulum lumen. Its function is as follows. May be involved in redox reactions associated with the formation of disulfide bonds. May contribute to the quality control of protein folding in the endoplasmic reticulum. May regulate protein folding by enhancing the catalytic activity of UGGT1/UGCGL1 and UGGT2/UGCGL2. This Homo sapiens (Human) protein is Selenoprotein F.